A 223-amino-acid polypeptide reads, in one-letter code: Cytidylate kinase (223 aa).

17–25 (GPTASGKGT) is an ATP binding site.

Belongs to the cytidylate kinase family. Type 1 subfamily.

It localises to the cytoplasm. It catalyses the reaction CMP + ATP = CDP + ADP. It carries out the reaction dCMP + ATP = dCDP + ADP. The protein is Cytidylate kinase of Bordetella bronchiseptica (strain ATCC BAA-588 / NCTC 13252 / RB50) (Alcaligenes bronchisepticus).